Consider the following 151-residue polypeptide: UPF0756 membrane protein Lreu_0946 (151 aa).

4 helical membrane-spanning segments follow: residues 4–24 (WLFLALVLLIAIFGHNSSLII), 52–72 (WGVTVISVAILIPIATGQIGF), 77–97 (AAFKTPAGWIAVGMGIAVAIL), and 115–135 (LVLGTIIGVVAFKGIAAGPVI).

Belongs to the UPF0756 family.

It is found in the cell membrane. In Limosilactobacillus reuteri (strain DSM 20016) (Lactobacillus reuteri), this protein is UPF0756 membrane protein Lreu_0946.